A 422-amino-acid polypeptide reads, in one-letter code: Isocitrate dehydrogenase [NADP] (422 aa).

T94 contributes to the NADP(+) binding site. D-threo-isocitrate-binding residues include S103, N105, R109, R119, and R143. D310 lines the Mg(2+) pocket. Residues 344–350, N357, Y396, and R400 contribute to the NADP(+) site; that span reads HGTAPKY.

Belongs to the isocitrate and isopropylmalate dehydrogenases family. As to quaternary structure, homodimer. The cofactor is Mg(2+). Requires Mn(2+) as cofactor.

It carries out the reaction D-threo-isocitrate + NADP(+) = 2-oxoglutarate + CO2 + NADPH. In terms of biological role, catalyzes the oxidative decarboxylation of isocitrate to 2-oxoglutarate and carbon dioxide with the concomitant reduction of NADP(+). The polypeptide is Isocitrate dehydrogenase [NADP] (icd) (Staphylococcus epidermidis (strain ATCC 35984 / DSM 28319 / BCRC 17069 / CCUG 31568 / BM 3577 / RP62A)).